We begin with the raw amino-acid sequence, 322 residues long: Ferrochelatase (322 aa).

Residues His194 and Glu275 each contribute to the Fe cation site.

Belongs to the ferrochelatase family.

It localises to the cytoplasm. The enzyme catalyses heme b + 2 H(+) = protoporphyrin IX + Fe(2+). Its pathway is porphyrin-containing compound metabolism; protoheme biosynthesis; protoheme from protoporphyrin-IX: step 1/1. In terms of biological role, catalyzes the ferrous insertion into protoporphyrin IX. The chain is Ferrochelatase from Yersinia enterocolitica serotype O:8 / biotype 1B (strain NCTC 13174 / 8081).